The chain runs to 113 residues: MQAKAVARTVRIAPRKVRLVVDLIRGKQVGEAIAILNHTPKTASPVVEKVLKSAIANAEHNYEMDVNNLVVEKVFVDEGPTLKRFRPRAMGRASQINKRTSHITVVVSEKKEG.

Belongs to the universal ribosomal protein uL22 family. As to quaternary structure, part of the 50S ribosomal subunit.

Its function is as follows. This protein binds specifically to 23S rRNA; its binding is stimulated by other ribosomal proteins, e.g. L4, L17, and L20. It is important during the early stages of 50S assembly. It makes multiple contacts with different domains of the 23S rRNA in the assembled 50S subunit and ribosome. In terms of biological role, the globular domain of the protein is located near the polypeptide exit tunnel on the outside of the subunit, while an extended beta-hairpin is found that lines the wall of the exit tunnel in the center of the 70S ribosome. The chain is Large ribosomal subunit protein uL22 from Bacillus cytotoxicus (strain DSM 22905 / CIP 110041 / 391-98 / NVH 391-98).